The primary structure comprises 282 residues: Undecaprenyl-diphosphatase (282 aa).

Transmembrane regions (helical) follow at residues 1–21 (MTLF…FLPV), 40–60 (GAAF…IYFY), 85–105 (AAMG…GLLF), 117–137 (YWVS…EWSV), 196–216 (FSFL…LYHT), 229–249 (AITA…AFLI), and 258–278 (SIFI…IAAG).

The protein belongs to the UppP family.

It localises to the cell inner membrane. The catalysed reaction is di-trans,octa-cis-undecaprenyl diphosphate + H2O = di-trans,octa-cis-undecaprenyl phosphate + phosphate + H(+). Functionally, catalyzes the dephosphorylation of undecaprenyl diphosphate (UPP). Confers resistance to bacitracin. This Chlorobium phaeobacteroides (strain DSM 266 / SMG 266 / 2430) protein is Undecaprenyl-diphosphatase.